A 359-amino-acid polypeptide reads, in one-letter code: F-box protein At1g10895 (359 aa).

Positions 2-48 (TTMSDLDEIMVAEILCRTPMTCLKTVRSVCKKWNALSKKWFFFGKAK) constitute an F-box domain.

The chain is F-box protein At1g10895 from Arabidopsis thaliana (Mouse-ear cress).